The sequence spans 568 residues: Glycine--tRNA ligase (568 aa).

Residues R97 and E163 each coordinate substrate. ATP is bound by residues 195–197, 205–210, 322–323, and 441–444; these read RNE, IRLREF, EC, and GIDR. Residue 210 to 214 participates in substrate binding; sequence FTQAE. 437–441 contacts substrate; it reads EPSFG.

This sequence belongs to the class-II aminoacyl-tRNA synthetase family.

It is found in the cytoplasm. It catalyses the reaction tRNA(Gly) + glycine + ATP = glycyl-tRNA(Gly) + AMP + diphosphate. Functionally, catalyzes the attachment of glycine to tRNA(Gly). The chain is Glycine--tRNA ligase from Pyrococcus furiosus (strain ATCC 43587 / DSM 3638 / JCM 8422 / Vc1).